Consider the following 391-residue polypeptide: Heme A synthase (391 aa).

8 consecutive transmembrane segments (helical) span residues 37–57 (IRLW…VGGL), 121–141 (RQLG…FLAA), 152–172 (LLAL…MVAS), 186–206 (LATH…QALL), 229–249 (TTVL…VAGI), 298–318 (FLHR…WIFG), 332–352 (LLAM…LSAA), and 354–374 (WQVA…ILHA). A heme-binding site is contributed by His300. His360 is a heme binding site.

It belongs to the COX15/CtaA family. Type 2 subfamily. As to quaternary structure, interacts with CtaB. Requires heme b as cofactor.

The protein resides in the cell membrane. The catalysed reaction is Fe(II)-heme o + 2 A + H2O = Fe(II)-heme a + 2 AH2. It participates in porphyrin-containing compound metabolism; heme A biosynthesis; heme A from heme O: step 1/1. Its function is as follows. Catalyzes the conversion of heme O to heme A by two successive hydroxylations of the methyl group at C8. The first hydroxylation forms heme I, the second hydroxylation results in an unstable dihydroxymethyl group, which spontaneously dehydrates, resulting in the formyl group of heme A. In Cereibacter sphaeroides (strain KD131 / KCTC 12085) (Rhodobacter sphaeroides), this protein is Heme A synthase.